The following is a 207-amino-acid chain: LexA repressor (207 aa).

Residues 28 to 48 constitute a DNA-binding region (H-T-H motif); the sequence is VREIGEAVGLASSSTVHGHLA. Active-site for autocatalytic cleavage activity residues include Ser129 and Lys167.

This sequence belongs to the peptidase S24 family. As to quaternary structure, homodimer.

It catalyses the reaction Hydrolysis of Ala-|-Gly bond in repressor LexA.. In terms of biological role, represses a number of genes involved in the response to DNA damage (SOS response), including recA and lexA. In the presence of single-stranded DNA, RecA interacts with LexA causing an autocatalytic cleavage which disrupts the DNA-binding part of LexA, leading to derepression of the SOS regulon and eventually DNA repair. The chain is LexA repressor from Bacillus licheniformis (strain ATCC 14580 / DSM 13 / JCM 2505 / CCUG 7422 / NBRC 12200 / NCIMB 9375 / NCTC 10341 / NRRL NRS-1264 / Gibson 46).